Reading from the N-terminus, the 610-residue chain is Elongation factor 4 (610 aa).

One can recognise a tr-type G domain in the interval 13 to 195 (SHIRNFSIVA…AIVNRLPAPK (183 aa)). GTP is bound by residues 25 to 30 (DHGKST) and 142 to 145 (NKID).

The protein belongs to the TRAFAC class translation factor GTPase superfamily. Classic translation factor GTPase family. LepA subfamily.

It localises to the cell inner membrane. The catalysed reaction is GTP + H2O = GDP + phosphate + H(+). In terms of biological role, required for accurate and efficient protein synthesis under certain stress conditions. May act as a fidelity factor of the translation reaction, by catalyzing a one-codon backward translocation of tRNAs on improperly translocated ribosomes. Back-translocation proceeds from a post-translocation (POST) complex to a pre-translocation (PRE) complex, thus giving elongation factor G a second chance to translocate the tRNAs correctly. Binds to ribosomes in a GTP-dependent manner. The chain is Elongation factor 4 from Rhizobium leguminosarum bv. trifolii (strain WSM2304).